The sequence spans 116 residues: Bacterial microcompartment shell protein CutR (116 aa).

One can recognise a BMC circularly permuted domain in the interval Arg10–Phe108.

This sequence belongs to the EutS/PduU family. In terms of assembly, has been crystallized in 5 structures (all are mutated, 3 have an N-terminal His-tag), most are homohexameric with a central pore. In two the homohexamer lies flat with a beta-barrel on the flat face created by the protruding N termini of the six chains. In 2 others the hexamer is not flat but has a six-fold screw axis; the screw pitch is 33.8 or 41.9 Angstroms depending on the structure. Interacts with the BMC major shell protein.

It localises to the bacterial microcompartment. Its pathway is amine and polyamine metabolism; choline degradation. Its function is as follows. A minor shell protein of the choline degradation-specific bacterial microcompartment (BMC). Proteins such as this one with circularly permuted BMC domains may play a key role in conferring heterogeneity and flexibility in this BMC. This Streptococcus intermedius (strain ATCC 27335 / DSM 20573 / CCUG 32759 / CIP 103248 / JCM 12996 / LMG 17840 / NCTC 11324 / SK54 / 1877) protein is Bacterial microcompartment shell protein CutR.